We begin with the raw amino-acid sequence, 145 residues long: Basic phospholipase A2 S2-22 (145 aa).

A signal peptide spans 1 to 19 (MYPAHLLVLLAVCVSLLGA). A propeptide spanning residues 20–27 (SDIPPQPL) is cleaved from the precursor. Disulfide bonds link Cys-38/Cys-99, Cys-54/Cys-144, Cys-56/Cys-72, Cys-71/Cys-127, Cys-78/Cys-120, Cys-88/Cys-113, and Cys-106/Cys-118. Positions 55, 57, and 59 each coordinate Ca(2+). Residue His-75 is part of the active site. Ca(2+) is bound at residue Asp-76. Asp-121 is a catalytic residue.

This sequence belongs to the phospholipase A2 family. Group I subfamily. D49 sub-subfamily. It depends on Ca(2+) as a cofactor. In terms of tissue distribution, expressed by the venom gland.

The protein localises to the secreted. It carries out the reaction a 1,2-diacyl-sn-glycero-3-phosphocholine + H2O = a 1-acyl-sn-glycero-3-phosphocholine + a fatty acid + H(+). In terms of biological role, snake venom phospholipase A2 (PLA2) that inhibits collagen-induced platelet aggregation. PLA2 catalyzes the calcium-dependent hydrolysis of the 2-acyl groups in 3-sn-phosphoglycerides. The sequence is that of Basic phospholipase A2 S2-22 from Austrelaps superbus (Lowland copperhead snake).